A 941-amino-acid chain; its full sequence is Cilia- and flagella-associated protein 69 (941 aa).

Low complexity predominate over residues 1-10 (MWTEEAAATA). Positions 1-23 (MWTEEAAATAEARESGIRNKSSS) are disordered.

The protein resides in the cell projection. It is found in the cilium. The protein localises to the flagellum. Functionally, cilium- and flagellum-associated protein. In the olfactory epithelium, regulates the speed of activation and termination of the odor response and thus contributes to the robustness of olfactory transduction pathways. Required for sperm flagellum assembly and stability. The polypeptide is Cilia- and flagella-associated protein 69 (Papio anubis (Olive baboon)).